The chain runs to 951 residues: 5'-3' exoribonuclease 2 (951 aa).

A CCHC-type zinc finger spans residues 262–278; sequence PCALCNQFGHEVKDCEG. N6-acetyllysine is present on K286. Positions 408–508 are disordered; sequence KDDEDSFRRR…SDSEPEPEDN (101 aa). A compositionally biased stretch (basic residues) spans 416 to 426; it reads RRQKEKRKRMK. T439 bears the Phosphothreonine mark. Composition is skewed to polar residues over residues 445 to 458 and 467 to 485; these read SRNSPGCQVASNPR and QRNSSPSISPNTSFASDGS. S448, S471, S473, S475, S482, S487, S499, S501, and S678 each carry phosphoserine. Residues R824, R847, and R851 each carry the asymmetric dimethylarginine; alternate modification. R824, R847, and R851 each carry omega-N-methylarginine; alternate. R880 bears the Asymmetric dimethylarginine mark. Residue R883 is modified to Asymmetric dimethylarginine; alternate. R883 carries the omega-N-methylarginine; alternate modification. An Omega-N-methylarginine modification is found at R895. Residues 907-951 are disordered; that stretch reads NQYQMLGGPGGYPPRRDDHRGGRQGYPREGRKYPLPPPSGRYSWN. The span at 920 to 938 shows a compositional bias: basic and acidic residues; it reads PRRDDHRGGRQGYPREGRK. R947 bears the Asymmetric dimethylarginine; alternate mark. R947 bears the Omega-N-methylarginine; alternate mark.

Belongs to the 5'-3' exonuclease family. XRN2/RAT1 subfamily. In terms of assembly, interacts with POLR2A and SMN1/SMN2. Interacts with CDKN2AIP and NKRF. Interacts with CDKN2AIPNL; the interaction is direct. Interacts with TRIM71 (via NHL repeats) in an RNA-dependent manner. Interacts with DHX34; the interaction is RNA-independent. In terms of tissue distribution, expressed in the spleen, testis, heart, brain, lung, liver, skeletal muscle, and kidney.

The protein localises to the nucleus. Its subcellular location is the nucleolus. In terms of biological role, possesses 5'-&gt;3' exoribonuclease activity. May promote the termination of transcription by RNA polymerase II. During transcription termination, cleavage at the polyadenylation site liberates a 5' fragment which is subsequently processed to form the mature mRNA and a 3' fragment which remains attached to the elongating polymerase. The processive degradation of this 3' fragment by this protein may promote termination of transcription. Binds to RNA polymerase II (RNAp II) transcription termination R-loops formed by G-rich pause sites. In Mus musculus (Mouse), this protein is 5'-3' exoribonuclease 2 (Xrn2).